Reading from the N-terminus, the 508-residue chain is Photosystem II CP47 reaction center protein (508 aa).

6 helical membrane passes run 21-36 (SVHLMHTALVSGWAGS), 101-115 (IILSGLLFLAAIWHW), 140-156 (GIHLFLSGVLCFSFGAF), 203-218 (IAAGVLGILAGLFHLS), 237-252 (VLSSSIAAVFFAAFVV), and 457-472 (TFALIFFFGHIWHGAR).

The protein belongs to the PsbB/PsbC family. PsbB subfamily. In terms of assembly, PSII is composed of 1 copy each of membrane proteins PsbA, PsbB, PsbC, PsbD, PsbE, PsbF, PsbH, PsbI, PsbJ, PsbK, PsbL, PsbM, PsbT, PsbX, PsbY, PsbZ, Psb30/Ycf12, at least 3 peripheral proteins of the oxygen-evolving complex and a large number of cofactors. It forms dimeric complexes. Binds multiple chlorophylls. PSII binds additional chlorophylls, carotenoids and specific lipids. serves as cofactor.

The protein localises to the plastid. The protein resides in the chloroplast thylakoid membrane. In terms of biological role, one of the components of the core complex of photosystem II (PSII). It binds chlorophyll and helps catalyze the primary light-induced photochemical processes of PSII. PSII is a light-driven water:plastoquinone oxidoreductase, using light energy to abstract electrons from H(2)O, generating O(2) and a proton gradient subsequently used for ATP formation. The polypeptide is Photosystem II CP47 reaction center protein (Adiantum capillus-veneris (Maidenhair fern)).